A 350-amino-acid polypeptide reads, in one-letter code: NADH-quinone oxidoreductase subunit H (350 aa).

8 consecutive transmembrane segments (helical) span residues 5-25, 76-96, 118-138, 162-182, 190-210, 243-263, 284-304, and 319-339; these read FIIE…IMAM, FLFV…SAVI, IALL…MIGG, IAMG…SLKV, MNWN…CSFA, LFAE…LFFG, LLGI…YMWV, and LGWR…GAVI.

Belongs to the complex I subunit 1 family. In terms of assembly, NDH-1 is composed of 14 different subunits. Subunits NuoA, H, J, K, L, M, N constitute the membrane sector of the complex.

The protein resides in the cell inner membrane. It catalyses the reaction a quinone + NADH + 5 H(+)(in) = a quinol + NAD(+) + 4 H(+)(out). Functionally, NDH-1 shuttles electrons from NADH, via FMN and iron-sulfur (Fe-S) centers, to quinones in the respiratory chain. The immediate electron acceptor for the enzyme in this species is believed to be ubiquinone. Couples the redox reaction to proton translocation (for every two electrons transferred, four hydrogen ions are translocated across the cytoplasmic membrane), and thus conserves the redox energy in a proton gradient. This subunit may bind ubiquinone. In Flavobacterium johnsoniae (strain ATCC 17061 / DSM 2064 / JCM 8514 / BCRC 14874 / CCUG 350202 / NBRC 14942 / NCIMB 11054 / UW101) (Cytophaga johnsonae), this protein is NADH-quinone oxidoreductase subunit H.